The chain runs to 176 residues: N,N-dimethyl phenylurea N-demethylase subunit beta (176 aa).

Belongs to the bacterial ring-hydroxylating dioxygenase beta subunit family. In terms of assembly, pdmA (subunit alpha) and PdmB (subunit beta) form the oxygenase component of a bacterial Rieske non-heme iron oxygenase (RO) system.

It catalyses the reaction a 1,1-dimethyl-3-phenylurea + 2 reduced [2Fe-2S]-[ferredoxin] + O2 + 2 H(+) = a 1-methyl-3-phenylurea + formaldehyde + 2 oxidized [2Fe-2S]-[ferredoxin] + H2O. The catalysed reaction is isoproturon + 2 reduced [2Fe-2S]-[ferredoxin] + O2 + 2 H(+) = 1-methyl-3-[4-(propan-2-yl)phenyl]urea + formaldehyde + 2 oxidized [2Fe-2S]-[ferredoxin] + H2O. The enzyme catalyses chlorotoluron + 2 reduced [2Fe-2S]-[ferredoxin] + O2 + 2 H(+) = 3-(3-chloro-4-methylphenyl)-1-methylurea + formaldehyde + 2 oxidized [2Fe-2S]-[ferredoxin] + H2O. It carries out the reaction metoxuron + 2 reduced [2Fe-2S]-[ferredoxin] + O2 + 2 H(+) = 3-(3-chloro-4-methoxylphenyl)-1-methylurea + formaldehyde + 2 oxidized [2Fe-2S]-[ferredoxin] + H2O. It catalyses the reaction monuron + 2 reduced [2Fe-2S]-[ferredoxin] + O2 + 2 H(+) = 3-(4-chlorophenyl)-1-methylurea + formaldehyde + 2 oxidized [2Fe-2S]-[ferredoxin] + H2O. The catalysed reaction is diuron + 2 reduced [2Fe-2S]-[ferredoxin] + O2 + 2 H(+) = 3-(3,4-dichlorophenyl)-1-methylurea + formaldehyde + 2 oxidized [2Fe-2S]-[ferredoxin] + H2O. The enzyme catalyses fluometuron + 2 reduced [2Fe-2S]-[ferredoxin] + O2 + 2 H(+) = 3-[3-(trifluoromethyl)phenyl]-1-methylurea + formaldehyde + 2 oxidized [2Fe-2S]-[ferredoxin] + H2O. It carries out the reaction fenuron + 2 reduced [2Fe-2S]-[ferredoxin] + O2 + 2 H(+) = 1-methyl-3-phenylurea + formaldehyde + 2 oxidized [2Fe-2S]-[ferredoxin] + H2O. It functions in the pathway xenobiotic degradation. Activity is stimulated in vitro by coexpression of a [3Fe-4S]-type ferredoxin. Its function is as follows. Part of the multicomponent N,N-dimethyl phenylurea N-demethylase responsible for the initial N-demethylation step during the bacterial metabolism of N,N-dimethyl-substituted phenylurea herbicides. Catalyzes the mono-N-demethylation of N,N-dimethyl-substituted phenylurea herbicides to their mono-N-demethylated derivatives. Is active on isoproturon (IPU), chlorotoluron, metoxuron, monoron, diuron, fluometuron and fenuron, but cannot transform the N-methoxy-N-methyl-substituted herbicides. This Sphingobium sp. (strain YBL2) protein is N,N-dimethyl phenylurea N-demethylase subunit beta.